Reading from the N-terminus, the 478-residue chain is Oxidative stress-induced growth inhibitor 1 (478 aa).

Phosphoserine is present on Ser-12.

Belongs to the OKL38 family. The cofactor is NADPH.

The protein resides in the midbody. Its function is as follows. Monooxygenase catalytic activity. Involved in regulation of cytokinesis; promotes RHOA activity, probably acting locally at the midbody in late cytokinesis. Monooxygenase activity is involved in stabilizing transient structures between daughter cells, termed intercellular bridges, before abscission. Regulates differentiation and proliferation through the regulation of cell death. This chain is Oxidative stress-induced growth inhibitor 1, found in Mus musculus (Mouse).